The following is a 263-amino-acid chain: Acyl-[acyl-carrier-protein]--UDP-N-acetylglucosamine O-acyltransferase (263 aa).

Belongs to the transferase hexapeptide repeat family. LpxA subfamily. In terms of assembly, homotrimer.

Its subcellular location is the cytoplasm. The catalysed reaction is a (3R)-hydroxyacyl-[ACP] + UDP-N-acetyl-alpha-D-glucosamine = a UDP-3-O-[(3R)-3-hydroxyacyl]-N-acetyl-alpha-D-glucosamine + holo-[ACP]. The protein operates within glycolipid biosynthesis; lipid IV(A) biosynthesis; lipid IV(A) from (3R)-3-hydroxytetradecanoyl-[acyl-carrier-protein] and UDP-N-acetyl-alpha-D-glucosamine: step 1/6. In terms of biological role, involved in the biosynthesis of lipid A, a phosphorylated glycolipid that anchors the lipopolysaccharide to the outer membrane of the cell. The protein is Acyl-[acyl-carrier-protein]--UDP-N-acetylglucosamine O-acyltransferase of Xanthomonas euvesicatoria pv. vesicatoria (strain 85-10) (Xanthomonas campestris pv. vesicatoria).